The primary structure comprises 792 residues: Pentatricopeptide repeat-containing protein At4g30700 (792 aa).

16 PPR repeats span residues 51 to 81 (DISLLTKLTQRLSDLGAIYYARDIFLSVQRP), 82 to 117 (DVFLFNVLMRGFSVNESPHSSLSVFAHLRKSTDLKP), 118 to 152 (NSSTYAFAISAASGFRDDRAGRVIHGQAVVDGCDS), 153 to 183 (ELLLGSNIVKMYFKFWRVEDARKVFDRMPEK), 184 to 218 (DTILWNTMISGYRKNEMYVESIQVFRDLINESCTR), 220 to 254 (DTTTLLDILPAVAELQELRLGMQIHSLATKTGCYS), 255 to 285 (HDYVLTGFISLYSKCGKIKMGSALFREFRKP), 286 to 320 (DIVAYNAMIHGYTSNGETELSLSLFKELMLSGARL), 321 to 352 (RSSTLVSLVPVSGHLMLIYAIHGYCLKSNFLS), 353 to 383 (HASVSTALTTVYSKLNEIESARKLFDESPEK), 384 to 418 (SLPSWNAMISGYTQNGLTEDAISLFREMQKSEFSP), 419 to 453 (NPVTITCILSACAQLGALSLGKWVHDLVRSTDFES), 454 to 484 (SIYVSTALIGMYAKCGSIAEARRLFDLMTKK), 485 to 519 (NEVTWNTMISGYGLHGQGQEALNIFYEMLNSGITP), 520 to 555 (TPVTFLCVLYACSHAGLVKEGDEIFNSMIHRYGFEP), and 556 to 586 (SVKHYACMVDILGRAGHLQRALQFIEAMSIE). A type E motif region spans residues 591-666 (VWETLLGACR…APGYTLIEIG (76 aa)). The type E(+) motif stretch occupies residues 667 to 697 (ETPHVFTSGDQSHPQVKEIYEKLEKLEGKMR). The tract at residues 698 to 792 (EAGYQPETEL…DGVCSCGDYW (95 aa)) is type DYW motif.

This sequence belongs to the PPR family. PCMP-H subfamily.

In Arabidopsis thaliana (Mouse-ear cress), this protein is Pentatricopeptide repeat-containing protein At4g30700 (DYW9).